The primary structure comprises 620 residues: Dopamine beta-hydroxylase (620 aa).

Residues 1–19 (MQPHLSHQPCWSLPSPSVR) are Cytoplasmic-facing. Residues 20–40 (EAASMYGTAVAIFLVILVAAL) form a helical; Signal-anchor for type II membrane protein membrane-spanning segment. The Intragranular segment spans residues 41–620 (QGSEPPESPF…FVVITHGGRH (580 aa)). The 117-residue stretch at 60-176 (GTLELSWNVS…DTVHLVYGIL (117 aa)) folds into the DOMON domain. N-linked (GlcNAc...) asparagine glycans are attached at residues N67 and N187. Cystine bridges form between C157/C599, C235/C286, C272/C298, C393/C506, C397/C568, and C469/C491. Residue Y233 is part of the active site. Cu(2+) is bound by residues H265 and H266. Residue N274 is glycosylated (N-linked (GlcNAc...) asparagine). Position 336 (H336) interacts with Cu(2+). The residue at position 349 (S349) is a Phosphoserine; by CaMK. H415 is an active-site residue. Cu(2+)-binding residues include H415 and H417. The N-linked (GlcNAc...) asparagine glycan is linked to N475. M490 lines the Cu(2+) pocket. N-linked (GlcNAc...) asparagine glycans are attached at residues N569 and N587.

Belongs to the copper type II ascorbate-dependent monooxygenase family. In terms of assembly, homotetramer; composed of two disulfide-linked dimers. It depends on Cu(2+) as a cofactor. Proteolytic cleavage after the membrane-anchor leads to the release of the soluble form. In terms of processing, N-glycosylated. In terms of tissue distribution, chromaffin granules of the adrenal medulla and synaptic vesicles of the sympathetic nervous system.

The protein resides in the cytoplasmic vesicle. It is found in the secretory vesicle lumen. It localises to the secretory vesicle. The protein localises to the chromaffin granule lumen. Its subcellular location is the secreted. The protein resides in the secretory vesicle membrane. It is found in the chromaffin granule membrane. It carries out the reaction dopamine + 2 L-ascorbate + O2 = (R)-noradrenaline + 2 monodehydro-L-ascorbate radical + H2O. Its pathway is catecholamine biosynthesis; (R)-noradrenaline biosynthesis; (R)-noradrenaline from dopamine: step 1/1. Catalyzes the hydroxylation of dopamine to noradrenaline (also known as norepinephrine), and is thus vital for regulation of these neurotransmitters. The protein is Dopamine beta-hydroxylase (Dbh) of Rattus norvegicus (Rat).